The primary structure comprises 115 residues: Photosystem II reaction center Psb28 protein (115 aa).

The protein belongs to the Psb28 family. As to quaternary structure, part of the photosystem II complex.

The protein resides in the plastid. It is found in the chloroplast thylakoid membrane. The protein is Photosystem II reaction center Psb28 protein of Cyanidium caldarium (Red alga).